Reading from the N-terminus, the 448-residue chain is Methylenetetrahydrofolate--tRNA-(uracil-5-)-methyltransferase TrmFO (448 aa).

An FAD-binding site is contributed by 13–18 (GAGLAG).

This sequence belongs to the MnmG family. TrmFO subfamily. FAD serves as cofactor.

The protein localises to the cytoplasm. The enzyme catalyses uridine(54) in tRNA + (6R)-5,10-methylene-5,6,7,8-tetrahydrofolate + NADH + H(+) = 5-methyluridine(54) in tRNA + (6S)-5,6,7,8-tetrahydrofolate + NAD(+). It carries out the reaction uridine(54) in tRNA + (6R)-5,10-methylene-5,6,7,8-tetrahydrofolate + NADPH + H(+) = 5-methyluridine(54) in tRNA + (6S)-5,6,7,8-tetrahydrofolate + NADP(+). In terms of biological role, catalyzes the folate-dependent formation of 5-methyl-uridine at position 54 (M-5-U54) in all tRNAs. This is Methylenetetrahydrofolate--tRNA-(uracil-5-)-methyltransferase TrmFO from Streptococcus pyogenes serotype M5 (strain Manfredo).